We begin with the raw amino-acid sequence, 747 residues long: DNA repair and recombination protein RAD54-like (747 aa).

Residues 1-42 (MRRSLAPSQLARRKPEDRSSDDEDWQPGTVTPKKRKSSSETQ) are disordered. Residues 2–9 (RRSLAPSQ) form a required for chromatin remodeling, strand pairing activities and coupling of ATPase activity region. The residue at position 38 (serine 38) is a Phosphoserine. A Helicase ATP-binding domain is found at 170–345 (SRRIPGSHGC…FSLVHFVNSG (176 aa)). 183-190 (DEMGLGKT) serves as a coordination point for ATP. Positions 296 to 299 (DEGH) match the DEGH box motif. Residues 500-653 (VLDYILAVTR…CVVDEEQDVE (154 aa)) form the Helicase C-terminal domain. N6-acetyllysine is present on lysine 515. The residue at position 572 (serine 572) is a Phosphoserine; by NEK1.

Belongs to the SNF2/RAD54 helicase family. Homohexamer. Interacts (via N-terminus) with RAD51. Interacts with NAP1L1. Interacts with BRD9; this interaction orchestrates RAD51-RAD54 complex formation. Post-translationally, acetylated. Acetylation promotes interaction with BRD9, and subsequently with RAD54, which is essential for homologous recombination (HR). In terms of processing, phosphorylated. Phosphorylation at Ser-572 by NEK1 specifically in G2 phase allows efficient removal of RAD51 filaments from DNA. As to expression, hardly detectable in most tissues. Dramatically increased in thymus, spleen and testis.

The protein localises to the nucleus. It catalyses the reaction ATP + H2O = ADP + phosphate + H(+). Functionally, plays an essential role in homologous recombination (HR) which is a major pathway for repairing DNA double-strand breaks (DSBs), single-stranded DNA (ssDNA) gaps, and stalled or collapsed replication forks. Acts as a molecular motor during the homology search and guides RAD51 ssDNA along a donor dsDNA thereby changing the homology search from the diffusion-based mechanism to a motor-guided mechanism. Plays also an essential role in RAD51-mediated synaptic complex formation which consists of three strands encased in a protein filament formed once homology is recognized. Once DNA strand exchange occured, dissociates RAD51 from nucleoprotein filaments formed on dsDNA. Deficiency also resulted in an increased frequency of end-to-end chromosome fusions involving telomeres compared to the controls, suggesting a putative role in telomere capping. Non-homologous end joining (NHEJ) and homologous recombination (HR) represent the two major pathways of DNA double-strand break (DSB) repair in eukaryotic cells. LIG4 and RAD54L cooperate to support cellular proliferation, repair spontaneous DSBs, and prevent chromosome and single chromatid aberrations. The polypeptide is DNA repair and recombination protein RAD54-like (Rad54l) (Mus musculus (Mouse)).